Reading from the N-terminus, the 296-residue chain is Acetylglutamate kinase (296 aa).

Residues Gly-69–Gly-70, Arg-91, and Asn-193 each bind substrate.

It belongs to the acetylglutamate kinase family. ArgB subfamily.

It is found in the cytoplasm. It carries out the reaction N-acetyl-L-glutamate + ATP = N-acetyl-L-glutamyl 5-phosphate + ADP. It participates in amino-acid biosynthesis; L-arginine biosynthesis; N(2)-acetyl-L-ornithine from L-glutamate: step 2/4. Its function is as follows. Catalyzes the ATP-dependent phosphorylation of N-acetyl-L-glutamate. In Delftia acidovorans (strain DSM 14801 / SPH-1), this protein is Acetylglutamate kinase.